The following is an 847-amino-acid chain: Glucans biosynthesis glucosyltransferase H (847 aa).

Residues M1–R138 lie on the Cytoplasmic side of the membrane. A helical transmembrane segment spans residues Y139–M156. Over K157–G193 the chain is Periplasmic. Residues I194–F216 form a helical membrane-spanning segment. Residues L217–R511 lie on the Cytoplasmic side of the membrane. The helical transmembrane segment at A512–S534 threads the bilayer. The Periplasmic portion of the chain corresponds to T535 to A567. Residues I568 to W590 traverse the membrane as a helical segment. Topologically, residues C591–R602 are cytoplasmic. A helical membrane pass occupies residues V603–H625. At T626–R679 the chain is on the periplasmic side. The chain crosses the membrane as a helical span at residues F680–S702. Over R703–G847 the chain is Cytoplasmic.

The protein belongs to the glycosyltransferase 2 family. OpgH subfamily.

It is found in the cell inner membrane. The protein operates within glycan metabolism; osmoregulated periplasmic glucan (OPG) biosynthesis. Functionally, involved in the biosynthesis of osmoregulated periplasmic glucans (OPGs). The protein is Glucans biosynthesis glucosyltransferase H of Salmonella typhi.